A 112-amino-acid chain; its full sequence is Large ribosomal subunit protein bL17 (112 aa).

Belongs to the bacterial ribosomal protein bL17 family. In terms of assembly, part of the 50S ribosomal subunit. Contacts protein L32.

The chain is Large ribosomal subunit protein bL17 from Desulforamulus reducens (strain ATCC BAA-1160 / DSM 100696 / MI-1) (Desulfotomaculum reducens).